Reading from the N-terminus, the 568-residue chain is MPYATARSGDVMSSAAPPCCTSLLGLSLSMFVAPGTLTAAPLDAPVVNAPAPTPPTPDLAYPELFQAVQRGELFDDQKHFVDFLPLRDPALINADYLAQHDHPGFDLRKFVDANFEESPPVQTDAIRQDTALREHIDLLWPKLVRSQNHVPPHSSLLALPHPYVVPGGRFREVYYWDSYFTMLGLVKSGETTLSRQMLDNFAYLIDTYGHIPNGNRTYYLSRSQPPFFSYMVELQAGVEGEAVYQRYLPQLQKEYAYWMQGSDDLQPGQAARHVVRLADGSVLNRYWDERDTPRPEAWLHDTRTAAEVTDRPAAEVYRDLRAGAESGWDYTSRWLADGQNLRTIRTTAILPIDLNSLLYHLERTLALACAQPGAECTRDYAALAQQRKQAIDAHLWNTAGYYADYDWQTRTLSNQVTAAALYPLFAGLASDDHAKRTASTVRKTLLRPGGLATTAVKTGQQWDEPNGWAPLQWVAVDGLRRYGEDALARTIGERFLAQVQALFAREHKLVEKYGLETDAAGGGGGEYALQDGFGWTNGVTLMLLNLYPGKDTKAAPAKRVRKPEAAAR.

A signal peptide spans 1–39 (MPYATARSGDVMSSAAPPCCTSLLGLSLSMFVAPGTLTA). Substrate-binding positions include Arg169, 176–177 (WD), Asn213, 222–224 (RSQ), 294–296 (RPE), and Gly327. Residues Asp329 and Glu511 each act as proton donor/acceptor in the active site. Residue Glu526 coordinates substrate.

This sequence belongs to the glycosyl hydrolase 37 family.

The protein resides in the periplasm. The catalysed reaction is alpha,alpha-trehalose + H2O = alpha-D-glucose + beta-D-glucose. Provides the cells with the ability to utilize trehalose at high osmolarity by splitting it into glucose molecules that can subsequently be taken up by the phosphotransferase-mediated uptake system. The sequence is that of Periplasmic trehalase from Xanthomonas axonopodis pv. citri (strain 306).